The sequence spans 509 residues: Acetyl-coenzyme A carboxylase carboxyl transferase subunit beta, chloroplastic (509 aa).

The segment at 164-216 is disordered; sequence HGSVCDGESHNSSEGESSSRRTHTKGVDLTIRESSNENERESSNENERKSSND. Composition is skewed to basic and acidic residues over residues 170-182 and 193-216; these read GESH…ESSS and TIRE…SSND. Residues 226–509 form the CoA carboxyltransferase N-terminal domain; it reads LWLQCENCYG…LNQNSNQVEC (284 aa). The Zn(2+) site is built by Cys-230, Cys-233, Cys-249, and Cys-252. A C4-type zinc finger spans residues 230 to 252; sequence CENCYGLNYKKFLKSKMNICEQC. Residues 288 to 307 form a disordered region; the sequence is FDSEGEQEQEQEQEQEEEET.

The protein belongs to the AccD/PCCB family. In terms of assembly, acetyl-CoA carboxylase is a heterohexamer composed of biotin carboxyl carrier protein, biotin carboxylase and 2 subunits each of ACCase subunit alpha and ACCase plastid-coded subunit beta (accD). Zn(2+) is required as a cofactor.

Its subcellular location is the plastid. It localises to the chloroplast stroma. It catalyses the reaction N(6)-carboxybiotinyl-L-lysyl-[protein] + acetyl-CoA = N(6)-biotinyl-L-lysyl-[protein] + malonyl-CoA. Its pathway is lipid metabolism; malonyl-CoA biosynthesis; malonyl-CoA from acetyl-CoA: step 1/1. Functionally, component of the acetyl coenzyme A carboxylase (ACC) complex. Biotin carboxylase (BC) catalyzes the carboxylation of biotin on its carrier protein (BCCP) and then the CO(2) group is transferred by the transcarboxylase to acetyl-CoA to form malonyl-CoA. The polypeptide is Acetyl-coenzyme A carboxylase carboxyl transferase subunit beta, chloroplastic (Ipomoea purpurea (Common morning glory)).